The following is a 394-amino-acid chain: GPI mannosyltransferase 2 (394 aa).

Helical transmembrane passes span 2–22, 47–67, 104–124, 132–152, 185–205, 232–252, 293–313, 323–343, and 371–391; these read LWKLLRLFIIIKLIQLAIIYF, YYNVIITTILNKLIVWDSVYF, LTSILISNLCHFASVITLYYL, FGLVSGLLMIISPAGVFLTGN, SITNILGYIISGIFCAINFTV, IILSIITGSILFMTFLMTNIY, IPNFILVLPVLIFNIYSLGYM, LLPLIVINGLIVVGGTFFWNI, and YAIGYCIVWNFVQTGLFAAFL.

Belongs to the PIGV family.

Its subcellular location is the endoplasmic reticulum membrane. It participates in glycolipid biosynthesis; glycosylphosphatidylinositol-anchor biosynthesis. Functionally, mannosyltransferase involved in glycosylphosphatidylinositol-anchor biosynthesis. Transfers the second mannose to the glycosylphosphatidylinositol during GPI precursor assembly. The polypeptide is GPI mannosyltransferase 2 (GPI18) (Candida albicans (strain SC5314 / ATCC MYA-2876) (Yeast)).